Here is a 341-residue protein sequence, read N- to C-terminus: Glucokinase (341 aa).

An ATP-binding site is contributed by 18-23; sequence GDIGGT.

It belongs to the bacterial glucokinase family.

The protein resides in the cytoplasm. The enzyme catalyses D-glucose + ATP = D-glucose 6-phosphate + ADP + H(+). This is Glucokinase from Rhizobium etli (strain CIAT 652).